We begin with the raw amino-acid sequence, 78 residues long: Myrmicitoxin-Ta2a (78 aa).

The N-terminal stretch at 1 to 26 is a signal peptide; that stretch reads MKLSFLSLALAIIFVTVLIYAPQAEA. A propeptide spanning residues 27–56 is cleaved from the precursor; that stretch reads KALADAVADADADADAAADAVADALADADA. The residue at position 77 (K77) is a Lysine amide.

It belongs to the formicidae venom precursor-01 superfamily. As to expression, expressed by the venom gland.

Its subcellular location is the secreted. In terms of biological role, peptide with toxicity towards insects that may also act as antimicrobial peptide. Causes calcium influx in F11 cells (EC(50)=5.8 nM), possibly by modulating sodium channels (Nav). In vivo, is lethal to insects, but does not show toxicity to vertebrates. Intraplantar injection into mice does not induce spontaneous nocifensive behaviors up to a dose of 200 pmol. This Tetramorium africanum (Fierce ant) protein is Myrmicitoxin-Ta2a.